A 425-amino-acid chain; its full sequence is Riboflavin biosynthesis protein RibBA (425 aa).

The interval M1–K204 is DHBP synthase. Residues R28 to E29, D33, R141 to T145, and E165 each bind D-ribulose 5-phosphate. E29 is a binding site for Mg(2+). A Mg(2+)-binding site is contributed by H144. The GTP cyclohydrolase II stretch occupies residues H205–L425. R259–E263 is a GTP binding site. Zn(2+) is bound by residues C264, C275, and C277. GTP is bound by residues Q280, E303–R305, and T325. The active-site Proton acceptor; for GTP cyclohydrolase activity is D337. R339 (nucleophile; for GTP cyclohydrolase activity) is an active-site residue. GTP is bound by residues T360 and K365.

It in the N-terminal section; belongs to the DHBP synthase family. This sequence in the C-terminal section; belongs to the GTP cyclohydrolase II family. Mg(2+) is required as a cofactor. Mn(2+) serves as cofactor. It depends on Zn(2+) as a cofactor.

It carries out the reaction D-ribulose 5-phosphate = (2S)-2-hydroxy-3-oxobutyl phosphate + formate + H(+). It catalyses the reaction GTP + 4 H2O = 2,5-diamino-6-hydroxy-4-(5-phosphoribosylamino)-pyrimidine + formate + 2 phosphate + 3 H(+). It functions in the pathway cofactor biosynthesis; riboflavin biosynthesis; 2-hydroxy-3-oxobutyl phosphate from D-ribulose 5-phosphate: step 1/1. The protein operates within cofactor biosynthesis; riboflavin biosynthesis; 5-amino-6-(D-ribitylamino)uracil from GTP: step 1/4. In terms of biological role, catalyzes the conversion of D-ribulose 5-phosphate to formate and 3,4-dihydroxy-2-butanone 4-phosphate. Functionally, catalyzes the conversion of GTP to 2,5-diamino-6-ribosylamino-4(3H)-pyrimidinone 5'-phosphate (DARP), formate and pyrophosphate. This chain is Riboflavin biosynthesis protein RibBA, found in Mycobacterium avium (strain 104).